Reading from the N-terminus, the 390-residue chain is Succinyl-diaminopimelate desuccinylase (390 aa).

Residue His-74 participates in Zn(2+) binding. Residue Asp-76 is part of the active site. Residue Asp-107 coordinates Zn(2+). The active-site Proton acceptor is Glu-140. Positions 141, 169, and 363 each coordinate Zn(2+).

The protein belongs to the peptidase M20A family. DapE subfamily. In terms of assembly, homodimer. Zn(2+) serves as cofactor. The cofactor is Co(2+).

The catalysed reaction is N-succinyl-(2S,6S)-2,6-diaminopimelate + H2O = (2S,6S)-2,6-diaminopimelate + succinate. Its pathway is amino-acid biosynthesis; L-lysine biosynthesis via DAP pathway; LL-2,6-diaminopimelate from (S)-tetrahydrodipicolinate (succinylase route): step 3/3. Catalyzes the hydrolysis of N-succinyl-L,L-diaminopimelic acid (SDAP), forming succinate and LL-2,6-diaminopimelate (DAP), an intermediate involved in the bacterial biosynthesis of lysine and meso-diaminopimelic acid, an essential component of bacterial cell walls. The chain is Succinyl-diaminopimelate desuccinylase from Bartonella bacilliformis (strain ATCC 35685 / KC583 / Herrer 020/F12,63).